An 813-amino-acid chain; its full sequence is Protein SBE22 (813 aa).

3 disordered regions span residues 1–66 (MIRP…HGHA), 107–240 (EIFS…GEFG), and 331–359 (QKDS…NRES). Basic and acidic residues predominate over residues 56–66 (RPSDNLFHGHA). The span at 107-121 (EIFSTSSSDTQSNIS) shows a compositional bias: low complexity. Residues 127–138 (SEDHSFGMDKSV) show a composition bias toward basic and acidic residues. Polar residues-rich tracts occupy residues 139–160 (DNSS…NGDS), 169–200 (VSVN…NRSM), and 214–234 (KNSS…NRSV).

Belongs to the SBE2 family.

Its subcellular location is the cytoplasm. It is found in the golgi apparatus. Its function is as follows. With SBE2, is involved in cell wall integrity and polarity processes like bud growth. The sequence is that of Protein SBE22 (SBE22) from Candida glabrata (strain ATCC 2001 / BCRC 20586 / JCM 3761 / NBRC 0622 / NRRL Y-65 / CBS 138) (Yeast).